The primary structure comprises 160 residues: Single-stranded DNA-binding protein 2 (160 aa).

One can recognise an SSB domain in the interval 2–104 (MNRVVLVGRL…VVAESVQFLE (103 aa)). Residues 107 to 160 (NNNVEGATSNNYQNKANYSNNNQTSSYRADTSQKSDSFASEGKPIDINEDDLPF) form a disordered region. Residues 115–129 (SNNYQNKANYSNNNQ) show a composition bias toward low complexity. Residues 130 to 144 (TSSYRADTSQKSDSF) show a composition bias toward polar residues. The Important for interaction with partner proteins signature appears at 155 to 160 (EDDLPF).

As to quaternary structure, homotetramer.

Plays an important role in DNA replication, recombination and repair. Binds to ssDNA and to an array of partner proteins to recruit them to their sites of action during DNA metabolism. The chain is Single-stranded DNA-binding protein 2 (ssb2) from Listeria monocytogenes serovar 1/2a (strain ATCC BAA-679 / EGD-e).